The sequence spans 914 residues: Thyroid peroxidase (914 aa).

The signal sequence occupies residues 1–31 (MRTLGAMAIMLVVMGTVIFLSFILRSRDILC). Residues 32–834 (GKTMKSHVIS…TCIDSGRLPR (803 aa)) are Extracellular-facing. An N-linked (GlcNAc...) asparagine glycan is attached at asparagine 123. A disulfide bridge connects residues cysteine 136 and cysteine 152. Residue aspartate 232 coordinates heme b. Histidine 233 serves as the catalytic Proton acceptor. Aspartate 234 serves as a coordination point for Ca(2+). 2 disulfide bridges follow: cysteine 253–cysteine 263 and cysteine 257–cysteine 278. Asparagine 271 and asparagine 299 each carry an N-linked (GlcNAc...) asparagine glycan. Threonine 313, phenylalanine 315, aspartate 317, and serine 319 together coordinate Ca(2+). Asparagine 334 carries an N-linked (GlcNAc...) asparagine glycan. Positions 387 and 482 each coordinate heme b. Intrachain disulfides connect cysteine 586–cysteine 643, cysteine 684–cysteine 709, cysteine 730–cysteine 770, cysteine 756–cysteine 782, cysteine 788–cysteine 802, cysteine 796–cysteine 811, and cysteine 813–cysteine 826. N-linked (GlcNAc...) asparagine glycosylation occurs at asparagine 603. The 56-residue stretch at 728 to 783 (DKCVFPEEVDNGNFVHCEESGKLVLVYSCFHGYKLQGQEQVTCTQKGWDSEPPVCK) folds into the Sushi domain. In terms of domain architecture, EGF-like; calcium-binding spans 784–827 (DVNECADLTHPPCHPSAQCKNTKGSFQCVCTDPYVLGEDEKTCI). The chain crosses the membrane as a helical span at residues 835–859 (ASWVSIALGALLIGGLASLTWIVIC). Residues 860–914 (RWTHADKKATLPITERVTTQSGCRKSQGRGISPHKAAAQDTGQEPASGSRVLLCE) lie on the Cytoplasmic side of the membrane. Positions 881–909 (GCRKSQGRGISPHKAAAQDTGQEPASGSR) are disordered.

It belongs to the peroxidase family. XPO subfamily. In terms of assembly, interacts with DUOX1, DUOX2 and CYBA. Requires Ca(2+) as cofactor. Heme b serves as cofactor. Post-translationally, heme is covalently bound through a H(2)O(2)-dependent autocatalytic process. Heme insertion is important for the delivery of protein at the cell surface. In terms of processing, cleaved in its N-terminal part.

The protein localises to the membrane. The enzyme catalyses 2 iodide + H2O2 + 2 H(+) = diiodine + 2 H2O. It catalyses the reaction [thyroglobulin]-L-tyrosine + iodide + H2O2 + H(+) = [thyroglobulin]-3-iodo-L-tyrosine + 2 H2O. It carries out the reaction [thyroglobulin]-3-iodo-L-tyrosine + iodide + H2O2 + H(+) = [thyroglobulin]-3,5-diiodo-L-tyrosine + 2 H2O. The catalysed reaction is 2 [thyroglobulin]-3,5-diiodo-L-tyrosine + H2O2 = [thyroglobulin]-L-thyroxine + [thyroglobulin]-dehydroalanine + 2 H2O. The enzyme catalyses [thyroglobulin]-3-iodo-L-tyrosine + [thyroglobulin]-3,5-diiodo-L-tyrosine + H2O2 = [thyroglobulin]-3,3',5-triiodo-L-thyronine + [thyroglobulin]-dehydroalanine + 2 H2O. It participates in hormone biosynthesis; thyroid hormone biosynthesis. Functionally, iodination and coupling of the hormonogenic tyrosines in thyroglobulin to yield the thyroid hormones T(3) and T(4). In Mus musculus (Mouse), this protein is Thyroid peroxidase (Tpo).